The sequence spans 524 residues: 2-isopropylmalate synthase (524 aa).

Residues 15–277 enclose the Pyruvate carboxyltransferase domain; sequence VVIFDTTMRD…ETKIDTTHIT (263 aa). Residues D24, H212, H214, and N248 each coordinate Mn(2+). Positions 401–524 are regulatory domain; the sequence is RVQRLRVVAG…RPEAAIASGF (124 aa).

It belongs to the alpha-IPM synthase/homocitrate synthase family. LeuA type 1 subfamily. In terms of assembly, homodimer. Requires Mn(2+) as cofactor.

The protein resides in the cytoplasm. The catalysed reaction is 3-methyl-2-oxobutanoate + acetyl-CoA + H2O = (2S)-2-isopropylmalate + CoA + H(+). The protein operates within amino-acid biosynthesis; L-leucine biosynthesis; L-leucine from 3-methyl-2-oxobutanoate: step 1/4. Its function is as follows. Catalyzes the condensation of the acetyl group of acetyl-CoA with 3-methyl-2-oxobutanoate (2-ketoisovalerate) to form 3-carboxy-3-hydroxy-4-methylpentanoate (2-isopropylmalate). This chain is 2-isopropylmalate synthase, found in Caulobacter sp. (strain K31).